The primary structure comprises 695 residues: Polyribonucleotide nucleotidyltransferase (695 aa).

Residues Asp486 and Asp492 each contribute to the Mg(2+) site. One can recognise a KH domain in the interval 553-612; it reads PRIETMQINTSKIATVIGPGGKQIRQIIERSGAQVDINDDGVINIAASTQESINKAKELI. The 69-residue stretch at 622–690 folds into the S1 motif domain; sequence GKVYNGRVTS…EKGQLKLSHK (69 aa).

Belongs to the polyribonucleotide nucleotidyltransferase family. Mg(2+) is required as a cofactor.

Its subcellular location is the cytoplasm. The catalysed reaction is RNA(n+1) + phosphate = RNA(n) + a ribonucleoside 5'-diphosphate. Involved in mRNA degradation. Catalyzes the phosphorolysis of single-stranded polyribonucleotides processively in the 3'- to 5'-direction. This is Polyribonucleotide nucleotidyltransferase from Chlamydia trachomatis serovar D (strain ATCC VR-885 / DSM 19411 / UW-3/Cx).